The primary structure comprises 321 residues: o-succinylbenzoate synthase (321 aa).

Lysine 134 (proton donor) is an active-site residue. 3 residues coordinate Mg(2+): aspartate 162, glutamate 191, and aspartate 214. Lysine 236 (proton acceptor) is an active-site residue.

This sequence belongs to the mandelate racemase/muconate lactonizing enzyme family. MenC type 1 subfamily. A divalent metal cation serves as cofactor.

The enzyme catalyses (1R,6R)-6-hydroxy-2-succinyl-cyclohexa-2,4-diene-1-carboxylate = 2-succinylbenzoate + H2O. It participates in quinol/quinone metabolism; 1,4-dihydroxy-2-naphthoate biosynthesis; 1,4-dihydroxy-2-naphthoate from chorismate: step 4/7. It functions in the pathway quinol/quinone metabolism; menaquinone biosynthesis. Its function is as follows. Converts 2-succinyl-6-hydroxy-2,4-cyclohexadiene-1-carboxylate (SHCHC) to 2-succinylbenzoate (OSB). This chain is o-succinylbenzoate synthase, found in Enterobacter sp. (strain 638).